The following is a 361-amino-acid chain: Porphobilinogen deaminase (361 aa).

S-(dipyrrolylmethanemethyl)cysteine is present on cysteine 265. The disordered stretch occupies residues 341-361 (LPPSSNTPTPQPITPITTNNS).

It belongs to the HMBS family. Requires dipyrromethane as cofactor.

The catalysed reaction is 4 porphobilinogen + H2O = hydroxymethylbilane + 4 NH4(+). It functions in the pathway porphyrin-containing compound metabolism; protoporphyrin-IX biosynthesis; coproporphyrinogen-III from 5-aminolevulinate: step 2/4. Tetrapolymerization of the monopyrrole PBG into the hydroxymethylbilane pre-uroporphyrinogen in several discrete steps. The sequence is that of Porphobilinogen deaminase (HEM3) from Debaryomyces hansenii (strain ATCC 36239 / CBS 767 / BCRC 21394 / JCM 1990 / NBRC 0083 / IGC 2968) (Yeast).